The following is a 75-amino-acid chain: Carwaprin-a (75 aa).

The N-terminal stretch at 1-24 (MSSGGLLLLLGLLTLWAELTPISG) is a signal peptide. In terms of domain architecture, WAP spans 27–72 (RPKKPGLCPPRPQKPPCVRECKNDWRCPGEQKCCRYGCIYECRDPI). Intrachain disulfides connect Cys34/Cys60, Cys43/Cys64, Cys47/Cys59, and Cys53/Cys68.

It belongs to the venom waprin family. As to expression, expressed by the venom gland.

It is found in the secreted. Damages membranes of susceptible bacteria. Has no hemolytic activity. Not toxic to mice. Does not inhibit the proteinases elastase and cathepsin G. The sequence is that of Carwaprin-a from Tropidechis carinatus (Australian rough-scaled snake).